The primary structure comprises 185 residues: Ribosome-recycling factor (185 aa).

The segment covering Ile142–Thr164 has biased composition (basic and acidic residues). The disordered stretch occupies residues Ile142–Asp173.

This sequence belongs to the RRF family.

The protein localises to the cytoplasm. In terms of biological role, responsible for the release of ribosomes from messenger RNA at the termination of protein biosynthesis. May increase the efficiency of translation by recycling ribosomes from one round of translation to another. The sequence is that of Ribosome-recycling factor from Mycolicibacterium gilvum (strain PYR-GCK) (Mycobacterium gilvum (strain PYR-GCK)).